Reading from the N-terminus, the 442-residue chain is MKMPKNNVYTVSRLNGEVRQLLEGELGKIWLNAEISNFAAPGSGHWYLTLKDNFAQIRSAMFKGRNRSVTFKPVNGQQVLVKGSISVYEPRGDYQLIIESMLPAGDGLLAQQYEALKMKLAAEGLFAADTKRPMPTNIQKIGVITSATGAAIKDVLHVLARRDSSIEVVIYPTQVQGDSASKSICKAIQTANARQEVDVLLLTRGGGSLEDLWCFNNEDLAHEIYNSALPIVSAVGHEVDTTISDYVADVRAPTPSAGAELLSGDAENKSEKLATFIARLKQSWQHYQLKTEQRSRSLENRLHRQDPKRKLEQFQQSFDEIQIRLNAALNDKLHKSTLQQQSLSYRLNQQSPQHRLTLESKHLDYLTARLNEGIKGKLNDVEMSLKNSAHQLETVSPLATLSRGYSITQDESGKVLLSSKDTQAGDTITTRLLDGEVKSTVI.

Belongs to the XseA family. Heterooligomer composed of large and small subunits.

It is found in the cytoplasm. The catalysed reaction is Exonucleolytic cleavage in either 5'- to 3'- or 3'- to 5'-direction to yield nucleoside 5'-phosphates.. Functionally, bidirectionally degrades single-stranded DNA into large acid-insoluble oligonucleotides, which are then degraded further into small acid-soluble oligonucleotides. This Shewanella sediminis (strain HAW-EB3) protein is Exodeoxyribonuclease 7 large subunit.